The sequence spans 755 residues: Serine/threonine-protein kinase GA29083 (755 aa).

Over residues 18 to 52 (QASASGSGTPKKTAASSAAAQNSKQLLDQLSQQQK) the composition is skewed to low complexity. The disordered stretch occupies residues 18–128 (QASASGSGTP…GSANTNGSAS (111 aa)). 2 stretches are compositionally biased toward basic and acidic residues: residues 53-66 (AQEE…RDCD) and 74-84 (EPEKDLDELRD). Positions 87 to 99 (GSLTGSGSVGKSN) are enriched in polar residues. The segment covering 100-128 (GSLSGASSTTSAPAGTSTPGSANTNGSAS) has biased composition (low complexity). Doublecortin domains lie at 157-243 (HRIK…VDYN) and 314-397 (RIVT…VEDF). The region spanning 484–742 (YTLSQIIGDG…SEDILDHYWT (259 aa)) is the Protein kinase domain. ATP contacts are provided by residues 490–498 (IGDGNFAIV) and Lys513. Asp605 functions as the Proton acceptor in the catalytic mechanism.

This sequence belongs to the protein kinase superfamily. CAMK Ser/Thr protein kinase family. CaMK subfamily.

The enzyme catalyses L-seryl-[protein] + ATP = O-phospho-L-seryl-[protein] + ADP + H(+). It carries out the reaction L-threonyl-[protein] + ATP = O-phospho-L-threonyl-[protein] + ADP + H(+). The chain is Serine/threonine-protein kinase GA29083 from Drosophila pseudoobscura pseudoobscura (Fruit fly).